Reading from the N-terminus, the 70-residue chain is Turripeptide Lol9.1 (70 aa).

The signal sequence occupies residues 1–20 (MKVYCLLLVLLVGLVSQAHG). A Kazal-like domain is found at 21 to 70 (KPTKRCLSVCSAEYEPVCGSDGKTYANKCHLMTEACWSPTSITLVHEGKC). 3 disulfides stabilise this stretch: cysteine 26/cysteine 56, cysteine 30/cysteine 49, and cysteine 38/cysteine 70.

Belongs to the conopeptide P-like superfamily. Expressed by the venom duct.

It localises to the secreted. Its function is as follows. Acts as a neurotoxin by inhibiting an ion channel. May also act as a serine protease inhibitor, since it possess the kazal serine protease inhibitor signature. In Iotyrris olangoensis (Sea snail), this protein is Turripeptide Lol9.1.